The following is a 352-amino-acid chain: Ion-translocating oxidoreductase complex subunit D (352 aa).

A run of 4 helical transmembrane segments spans residues 20-40 (IMLLVLIAALPGIAAQTWFFG), 42-62 (GTLFQIVLAAITALVAEAIVL), 69-91 (VASHLQDYSALLTGLLLAVSIPP), and 123-143 (PAMIGYVVLLISFPVQMTSWL). Thr187 is modified (FMN phosphoryl threonine). Transmembrane regions (helical) follow at residues 215–235 (LAGVGWQWVNLAWLVGGVFLL), 242–262 (WHIPVSFLLTLALCAALGWLF), 267–287 (LASPQLHLLSGATMLGAFFIL), 301–321 (LIFGALAGVLVWLIRSFGGYP), and 322–342 (DGVAFAVLLANITVPLIDYYT).

It belongs to the NqrB/RnfD family. In terms of assembly, the complex is composed of six subunits: RsxA, RsxB, RsxC, RsxD, RsxE and RsxG. The cofactor is FMN.

It is found in the cell inner membrane. Part of a membrane-bound complex that couples electron transfer with translocation of ions across the membrane. Required to maintain the reduced state of SoxR. This is Ion-translocating oxidoreductase complex subunit D from Salmonella choleraesuis (strain SC-B67).